A 334-amino-acid polypeptide reads, in one-letter code: Glyceraldehyde-3-phosphate dehydrogenase (334 aa).

Residues 12-13, Asp34, and Arg79 contribute to the NAD(+) site; that span reads RI. D-glyceraldehyde 3-phosphate contacts are provided by residues 150–152, Thr181, 210–211, and Arg233; these read SCT and TG. The Nucleophile role is filled by Cys151. Residue Asn315 coordinates NAD(+).

It belongs to the glyceraldehyde-3-phosphate dehydrogenase family. In terms of assembly, homotetramer.

The protein resides in the cytoplasm. It catalyses the reaction D-glyceraldehyde 3-phosphate + phosphate + NAD(+) = (2R)-3-phospho-glyceroyl phosphate + NADH + H(+). It functions in the pathway carbohydrate degradation; glycolysis; pyruvate from D-glyceraldehyde 3-phosphate: step 1/5. The sequence is that of Glyceraldehyde-3-phosphate dehydrogenase (GPD) from Wickerhamomyces ciferrii (strain ATCC 14091 / BCRC 22168 / CBS 111 / JCM 3599 / NBRC 0793 / NRRL Y-1031 F-60-10) (Yeast).